The primary structure comprises 115 residues: uncharacterized protein (115 aa).

This is an uncharacterized protein from Acidianus filamentous virus 1 (isolate United States/Yellowstone) (AFV-1).